A 1939-amino-acid polypeptide reads, in one-letter code: Myosin-4 (1939 aa).

The 50-residue stretch at 33-82 folds into the Myosin N-terminal SH3-like domain; the sequence is DAKSSVFVVDAKESYVKATVQSREGGKVTAKTEGGATVTVKEDQVFSMNP. Position 36 is a phosphoserine (S36). 2 positions are modified to phosphothreonine: T64 and T69. Residue S79 is modified to Phosphoserine. In terms of domain architecture, Myosin motor spans 86–782; it reads DKIEDMAMMT…LLGTLEEMRD (697 aa). At K130 the chain carries N6,N6,N6-trimethyllysine. 179–186 serves as a coordination point for ATP; the sequence is GESGAGKT. At Y389 the chain carries Phosphotyrosine. T391 carries the post-translational modification Phosphothreonine. The residue at position 392 (S392) is a Phosphoserine. T419 bears the Phosphothreonine mark. Y424 bears the Phosphotyrosine mark. S625 is subject to Phosphoserine. The tract at residues 659-681 is actin-binding; that stretch reads LNKLMTNLKSTHPHFVRCLIPNE. Residue H757 is modified to Pros-methylhistidine. Residues 761–775 are actin-binding; it reads KFGHTKVFFKAGLLG. T776 is modified (phosphothreonine). In terms of domain architecture, IQ spans 785–814; it reads LAQLITRTQAVCRGYLMRVEFRKMMERRES. The stretch at 843 to 1939 forms a coiled coil; that stretch reads LLKSAETEKE…EVHTKVISEE (1097 aa). 2 positions are modified to phosphoserine: S1092 and S1096. 2 disordered regions span residues 1128–1147 and 1153–1172; these read AERA…SREL and RLEE…KKRE. Phosphoserine is present on residues S1162 and S1237. Residue T1241 is modified to Phosphothreonine. S1243 carries the phosphoserine modification. T1255 is subject to Phosphothreonine. S1261 is subject to Phosphoserine. Residue T1265 is modified to Phosphothreonine. The residue at position 1278 (S1278) is a Phosphoserine. T1286 is subject to Phosphothreonine. 5 positions are modified to phosphoserine: S1288, S1292, S1303, S1306, and S1413. Y1464 is subject to Phosphotyrosine. T1467 is modified (phosphothreonine). The residue at position 1474 (S1474) is a Phosphoserine. Y1492 is modified (phosphotyrosine). S1495 carries the phosphoserine modification. T1501 is modified (phosphothreonine). Position 1514 is a phosphoserine (S1514). T1517 is subject to Phosphothreonine. Phosphoserine is present on residues S1542, S1547, S1554, S1574, S1600, S1603, S1714, and S1726. A phosphothreonine mark is found at T1730 and T1736. S1739 bears the Phosphoserine mark.

The protein belongs to the TRAFAC class myosin-kinesin ATPase superfamily. Myosin family. In terms of assembly, muscle myosin is a hexameric protein that consists of 2 heavy chain subunits (MHC), 2 alkali light chain subunits (MLC) and 2 regulatory light chain subunits (MLC-2).

It localises to the cytoplasm. The protein localises to the myofibril. Its function is as follows. Muscle contraction. The sequence is that of Myosin-4 from Rattus norvegicus (Rat).